The sequence spans 40 residues: Small polypeptide DEVIL 6 (40 aa).

The interval 9-40 (SSSRGLGGVLREQRAKLYIIKRCVVMLLCWQD) is required for DVL/RTFL small polypeptide activity. A helical transmembrane segment spans residues 12-28 (RGLGGVLREQRAKLYII).

This sequence belongs to the DVL/RTFL small polypeptides family.

The protein resides in the cell membrane. Small polypeptide acting as a regulatory molecule which coordinates cellular responses required for differentiation, growth and development, probably by restricting polar cell proliferation in lateral organs and coordinating socket cell recruitment and differentiation at trichome sites. This Arabidopsis thaliana (Mouse-ear cress) protein is Small polypeptide DEVIL 6.